The primary structure comprises 153 residues: Endoribonuclease YbeY (153 aa).

Positions 114, 118, and 124 each coordinate Zn(2+).

This sequence belongs to the endoribonuclease YbeY family. Zn(2+) serves as cofactor.

The protein localises to the cytoplasm. Its function is as follows. Single strand-specific metallo-endoribonuclease involved in late-stage 70S ribosome quality control and in maturation of the 3' terminus of the 16S rRNA. This chain is Endoribonuclease YbeY, found in Shewanella amazonensis (strain ATCC BAA-1098 / SB2B).